Reading from the N-terminus, the 242-residue chain is 1-(5-phosphoribosyl)-5-[(5-phosphoribosylamino)methylideneamino] imidazole-4-carboxamide isomerase (242 aa).

Asp8 (proton acceptor) is an active-site residue. Asp129 acts as the Proton donor in catalysis.

Belongs to the HisA/HisF family.

It is found in the cytoplasm. The enzyme catalyses 1-(5-phospho-beta-D-ribosyl)-5-[(5-phospho-beta-D-ribosylamino)methylideneamino]imidazole-4-carboxamide = 5-[(5-phospho-1-deoxy-D-ribulos-1-ylimino)methylamino]-1-(5-phospho-beta-D-ribosyl)imidazole-4-carboxamide. It participates in amino-acid biosynthesis; L-histidine biosynthesis; L-histidine from 5-phospho-alpha-D-ribose 1-diphosphate: step 4/9. The protein is 1-(5-phosphoribosyl)-5-[(5-phosphoribosylamino)methylideneamino] imidazole-4-carboxamide isomerase of Maridesulfovibrio salexigens (strain ATCC 14822 / DSM 2638 / NCIMB 8403 / VKM B-1763) (Desulfovibrio salexigens).